We begin with the raw amino-acid sequence, 29 residues long: Toxin II.9 (29 aa).

The LCN-type CS-alpha/beta domain occupies 2-29 (KDGYLVNKYTGCKVNCYKLGENKFCNRE).

This sequence belongs to the long (4 C-C) scorpion toxin superfamily. Sodium channel inhibitor family. Beta subfamily. In terms of tissue distribution, expressed by the venom gland.

The protein resides in the secreted. Binds to sodium channels (Nav) and shift the voltage of activation toward more negative potentials. This toxin is active on crustaceans. The chain is Toxin II.9 from Centruroides limpidus (Mexican scorpion).